The following is a 501-amino-acid chain: Cytochrome P450 71B3 (501 aa).

A helical membrane pass occupies residues 2 to 22; the sequence is SILLYFFFLPVILSLIFMKKF. A heme-binding site is contributed by Cys445.

This sequence belongs to the cytochrome P450 family. Requires heme as cofactor.

The protein localises to the membrane. The polypeptide is Cytochrome P450 71B3 (CYP71B3) (Arabidopsis thaliana (Mouse-ear cress)).